A 408-amino-acid polypeptide reads, in one-letter code: Succinylornithine transaminase (408 aa).

At lysine 252 the chain carries N6-(pyridoxal phosphate)lysine.

Belongs to the class-III pyridoxal-phosphate-dependent aminotransferase family. AstC subfamily. Requires pyridoxal 5'-phosphate as cofactor.

The catalysed reaction is N(2)-succinyl-L-ornithine + 2-oxoglutarate = N-succinyl-L-glutamate 5-semialdehyde + L-glutamate. The protein operates within amino-acid degradation; L-arginine degradation via AST pathway; L-glutamate and succinate from L-arginine: step 3/5. In terms of biological role, catalyzes the transamination of N(2)-succinylornithine and alpha-ketoglutarate into N(2)-succinylglutamate semialdehyde and glutamate. Can also act as an acetylornithine aminotransferase. The polypeptide is Succinylornithine transaminase (Salmonella heidelberg (strain SL476)).